A 166-amino-acid chain; its full sequence is Sec-independent protein translocase protein TatB (166 aa).

Residues 2-22 (FNDIGALELLTLGVLAVLVFG) traverse the membrane as a helical segment. The interval 110 to 166 (TPAASDTANSAVNGSAGAAADGVTTSLTKTGETTPDLLKKAPQQAQPERPPFDADAT) is disordered. Low complexity predominate over residues 117 to 129 (ANSAVNGSAGAAA). The segment covering 132 to 142 (VTTSLTKTGET) has biased composition (polar residues).

It belongs to the TatB family. In terms of assembly, the Tat system comprises two distinct complexes: a TatABC complex, containing multiple copies of TatA, TatB and TatC subunits, and a separate TatA complex, containing only TatA subunits. Substrates initially bind to the TatABC complex, which probably triggers association of the separate TatA complex to form the active translocon.

The protein localises to the cell membrane. Functionally, part of the twin-arginine translocation (Tat) system that transports large folded proteins containing a characteristic twin-arginine motif in their signal peptide across membranes. Together with TatC, TatB is part of a receptor directly interacting with Tat signal peptides. TatB may form an oligomeric binding site that transiently accommodates folded Tat precursor proteins before their translocation. This Streptomyces griseus subsp. griseus (strain JCM 4626 / CBS 651.72 / NBRC 13350 / KCC S-0626 / ISP 5235) protein is Sec-independent protein translocase protein TatB.